We begin with the raw amino-acid sequence, 173 residues long: Mesencephalic astrocyte-derived neurotrophic factor homolog (173 aa).

An N-terminal signal peptide occupies residues 1–22; it reads MNTSHIVLMICFIVGVGQTALA. 4 cysteine pairs are disulfide-bonded: Cys28–Cys114, Cys31–Cys103, Cys61–Cys72, and Cys148–Cys151.

This sequence belongs to the ARMET family.

It is found in the secreted. Required during the maturation of the embryonic nervous system for maintenance of neuronal and cuticular connectivity. Essential for maintenance of dopaminergic neurons and dopamine levels. The sequence is that of Mesencephalic astrocyte-derived neurotrophic factor homolog from Drosophila virilis (Fruit fly).